The chain runs to 153 residues: MSRAPKLSLNLQFPAGKAWPEHKSLLPKATVAAWIKAALFADAELTVRFVDADEGRTLNRTYRGKDYATNVLTFAYAESEDDPVTGDLILCCPVVEKEANEQGKPLGAHYAHLLVHGTLHAQGYDHEDEDEAEEMEAIETEVLGKLGFPDPYE.

Positions 116, 120, and 126 each coordinate Zn(2+).

The protein belongs to the endoribonuclease YbeY family. Zn(2+) is required as a cofactor.

The protein localises to the cytoplasm. Single strand-specific metallo-endoribonuclease involved in late-stage 70S ribosome quality control and in maturation of the 3' terminus of the 16S rRNA. In Paraburkholderia phymatum (strain DSM 17167 / CIP 108236 / LMG 21445 / STM815) (Burkholderia phymatum), this protein is Endoribonuclease YbeY.